The following is a 675-amino-acid chain: DNA ligase (675 aa).

Residues 33–37 (DAEYD), 82–83 (SL), and Glu114 each bind NAD(+). Residue Lys116 is the N6-AMP-lysine intermediate of the active site. Residues Arg137, Glu174, Lys291, and Lys315 each coordinate NAD(+). Zn(2+)-binding residues include Cys409, Cys412, Cys427, and Cys433. The BRCT domain occupies 595 to 675 (AGDNPFAGKT…EMIRLLDQSK (81 aa)).

Belongs to the NAD-dependent DNA ligase family. LigA subfamily. Requires Mg(2+) as cofactor. The cofactor is Mn(2+).

It carries out the reaction NAD(+) + (deoxyribonucleotide)n-3'-hydroxyl + 5'-phospho-(deoxyribonucleotide)m = (deoxyribonucleotide)n+m + AMP + beta-nicotinamide D-nucleotide.. Functionally, DNA ligase that catalyzes the formation of phosphodiester linkages between 5'-phosphoryl and 3'-hydroxyl groups in double-stranded DNA using NAD as a coenzyme and as the energy source for the reaction. It is essential for DNA replication and repair of damaged DNA. This is DNA ligase from Proteus mirabilis (strain HI4320).